The primary structure comprises 54 residues: ATCAGQDKPCKETCDCCGERGECVCGLSYEGKYRCICRQGTFLIAWYKLASCKK.

Cystine bridges form between Cys3-Cys17, Cys10-Cys23, Cys14-Cys52, Cys16-Cys37, and Cys25-Cys35.

As to expression, expressed by the venom gland.

It localises to the secreted. Blocks voltage-gated sodium channels (Nav). Causes immediate spastic paralysis and death in mice within 1 minute of injection at dose levels of 1.5 ug per mouse. This chain is U7-ctenitoxin-Pk1a, found in Phoneutria keyserlingi (Brazilian wandering spider).